The following is a 461-amino-acid chain: Mitochondrial distribution and morphology protein 12 (461 aa).

Residues 1-454 form the SMP-LTD domain; sequence MSLDLDWNLL…YPNYYTIDLP (454 aa). Disordered regions lie at residues 75–104 and 226–301; these read RRRG…VHHG and DASS…PSSA. Composition is skewed to polar residues over residues 80 to 97 and 272 to 288; these read RQTT…SPTD and RATS…QNSP.

It belongs to the MDM12 family. Component of the ER-mitochondria encounter structure (ERMES) or MDM complex, composed of MMM1, MDM10, MDM12 and MDM34. An MMM1 homodimer associates with one molecule of MDM12 on each side in a pairwise head-to-tail manner, and the SMP-LTD domains of MMM1 and MDM12 generate a continuous hydrophobic tunnel for phospholipid trafficking.

It localises to the mitochondrion outer membrane. It is found in the endoplasmic reticulum membrane. Its function is as follows. Component of the ERMES/MDM complex, which serves as a molecular tether to connect the endoplasmic reticulum (ER) and mitochondria. Components of this complex are involved in the control of mitochondrial shape and protein biogenesis, and function in nonvesicular lipid trafficking between the ER and mitochondria. MDM12 is required for the interaction of the ER-resident membrane protein MMM1 and the outer mitochondrial membrane-resident beta-barrel protein MDM10. The MDM12-MMM1 subcomplex functions in the major beta-barrel assembly pathway that is responsible for biogenesis of all mitochondrial outer membrane beta-barrel proteins, and acts in a late step after the SAM complex. The MDM10-MDM12-MMM1 subcomplex further acts in the TOM40-specific pathway after the action of the MDM12-MMM1 complex. Essential for establishing and maintaining the structure of mitochondria and maintenance of mtDNA nucleoids. In Mycosarcoma maydis (Corn smut fungus), this protein is Mitochondrial distribution and morphology protein 12.